The chain runs to 424 residues: MSDLLSRTHAIALDAADPLRPLRNEFLIPRHGGGEQTYFVGNSLGLQPRGAQAAVQEVMKQWGELAVEGHFTGPTQWLSYHRLVSAQLARVVGALPSEVVAMNTLSVNLHLMMVSFYRPTAQRPVILMEAGAFPTDRHAVEAQIRFHGFDPAECLVEVQPDEANGTISLTAIERAIAEHGPRLALVLWPGVQYRTGQAFDLDAITRAARLQGARIGFDLAHSVGNLPLRLHDVAPDFAVWCHYKYLNSGPGAVAGAFVHERHHRDTTLPRFAGWWGHEEATRFQMAPQFTPAIGAEGWQLSNPPILGLAPLRASLDLFERAGMEALRSKSLALTGMLEALVRARLSGVLDIITPAEPQRRGCQLSLRVIGGRERGRALFEHLRGIGVLGDWREPDVIRISPTPLYNRYLDVHHFVEEVEAWAGL.

Pyridoxal 5'-phosphate contacts are provided by residues Leu-105, Ser-106, 133 to 136 (FPTD), Asp-218, His-221, and Tyr-243. Lys-244 bears the N6-(pyridoxal phosphate)lysine mark. 2 residues coordinate pyridoxal 5'-phosphate: Trp-274 and Asn-302.

Belongs to the kynureninase family. In terms of assembly, homodimer. Pyridoxal 5'-phosphate serves as cofactor.

It carries out the reaction L-kynurenine + H2O = anthranilate + L-alanine + H(+). The enzyme catalyses 3-hydroxy-L-kynurenine + H2O = 3-hydroxyanthranilate + L-alanine + H(+). It participates in amino-acid degradation; L-kynurenine degradation; L-alanine and anthranilate from L-kynurenine: step 1/1. It functions in the pathway cofactor biosynthesis; NAD(+) biosynthesis; quinolinate from L-kynurenine: step 2/3. Catalyzes the cleavage of L-kynurenine (L-Kyn) and L-3-hydroxykynurenine (L-3OHKyn) into anthranilic acid (AA) and 3-hydroxyanthranilic acid (3-OHAA), respectively. This is Kynureninase from Stenotrophomonas maltophilia (strain K279a).